Here is a 932-residue protein sequence, read N- to C-terminus: RNA-binding protein 12 (932 aa).

The tract at residues 97 to 116 (IPPANASRSGPPPSSGMSGR) is disordered. Low complexity predominate over residues 98-116 (PPANASRSGPPPSSGMSGR). Residues 304–379 (LYVSVHGMPF…RYVEVSPATE (76 aa)) form the RRM 1 domain. 2 positions are modified to phosphoserine: Ser-352 and Ser-375. Polar residues-rich tracts occupy residues 392-401 (KQNMGPSGQT) and 408-417 (LPRSKSPSGQ). The tract at residues 392–424 (KQNMGPSGQTHPPPQTLPRSKSPSGQKRSRSRS) is disordered. Residues Ser-420, Ser-422, and Ser-424 each carry the phosphoserine modification. The 78-residue stretch at 430-507 (FCVYLKGLPF…RFIQVHPITK (78 aa)) folds into the RRM 2 domain. The residue at position 525 (Ser-525) is a Phosphoserine. Positions 717–734 (NGPPFNFPGNFGGSNAFG) are enriched in low complexity. The disordered stretch occupies residues 717–855 (NGPPFNFPGN…PGFASSSGKP (139 aa)). Residues 783-811 (SGFGGGPQNFGNGPGSLGGPPGFGSGPPG) are compositionally biased toward gly residues. A compositionally biased stretch (pro residues) spans 824 to 838 (AFGPGPGPGPGPGPG). Positions 856-932 (GPTVIKVQNM…PIGSRKVNLY (77 aa)) constitute an RRM 3 domain.

The protein resides in the nucleus. This chain is RNA-binding protein 12 (RBM12), found in Pongo abelii (Sumatran orangutan).